The chain runs to 217 residues: Translation initiation factor IF-3 (217 aa).

Residues 185–217 (YNLPETETTRIREENREKQKEKENTSKEGNKDA) are disordered. Positions 191 to 217 (ETTRIREENREKQKEKENTSKEGNKDA) are enriched in basic and acidic residues.

The protein belongs to the IF-3 family. In terms of assembly, monomer.

The protein resides in the cytoplasm. IF-3 binds to the 30S ribosomal subunit and shifts the equilibrium between 70S ribosomes and their 50S and 30S subunits in favor of the free subunits, thus enhancing the availability of 30S subunits on which protein synthesis initiation begins. The polypeptide is Translation initiation factor IF-3 (Methylacidiphilum infernorum (isolate V4) (Methylokorus infernorum (strain V4))).